The primary structure comprises 407 residues: Expansin-like protein 2 (407 aa).

The signal sequence occupies residues 1-23 (MKMKNFLSKSLLVLLIGLIGVKS). Residues 42–141 (HGNCGYEQLT…KKVSCDVTGN (100 aa)) enclose the Expansin-like EG45 domain. 2 disulfides stabilise this stretch: C45/C75 and C78/C136. 3 N-linked (GlcNAc...) asparagine glycosylation sites follow: N70, N117, and N387.

The protein belongs to the expansin family. Expansin A subfamily.

The protein localises to the secreted. Functionally, unlikely to encode with a protein with expansin activity. The polypeptide is Expansin-like protein 2 (expl2) (Dictyostelium discoideum (Social amoeba)).